The primary structure comprises 157 residues: UPF0758 protein VC_0510 (157 aa).

The MPN domain occupies 36–157 (ALTNPDATKE…CTSFAERGWL (122 aa)). Residues His107, His109, and Asp120 each coordinate Zn(2+). The JAMM motif motif lies at 107 to 120 (HNHPSGDSTPSQAD).

This sequence belongs to the UPF0758 family.

This Vibrio cholerae serotype O1 (strain ATCC 39315 / El Tor Inaba N16961) protein is UPF0758 protein VC_0510.